Consider the following 635-residue polypeptide: ATP-dependent zinc metalloprotease FtsH (635 aa).

The Cytoplasmic portion of the chain corresponds to 1 to 6 (MNNQGR). A helical transmembrane segment spans residues 7 to 27 (SILTWAALFVFVILLFNVFQS). Over 28 to 103 (DGLLGGRNNI…VVPLETRMNT (76 aa)) the chain is Periplasmic. A helical transmembrane segment spans residues 104–124 (FLGFLISWFPMLLLIGVWVFF). Topologically, residues 125–635 (MRQMHGGGKA…KKAKKESTNI (511 aa)) are cytoplasmic. Position 195 to 202 (195 to 202 (GPPGTGKT)) interacts with ATP. His417 is a Zn(2+) binding site. Residue Glu418 is part of the active site. Positions 421 and 495 each coordinate Zn(2+). Positions 600 to 635 (SEEENKFPFNDSPTIKIDKEKSPEKAKKAKKESTNI) are disordered. Residues 615–635 (KIDKEKSPEKAKKAKKESTNI) show a composition bias toward basic and acidic residues.

In the central section; belongs to the AAA ATPase family. It in the C-terminal section; belongs to the peptidase M41 family. In terms of assembly, homohexamer. Zn(2+) serves as cofactor.

Its subcellular location is the cell inner membrane. Acts as a processive, ATP-dependent zinc metallopeptidase for both cytoplasmic and membrane proteins. Plays a role in the quality control of integral membrane proteins. The polypeptide is ATP-dependent zinc metalloprotease FtsH (Rickettsia felis (strain ATCC VR-1525 / URRWXCal2) (Rickettsia azadi)).